We begin with the raw amino-acid sequence, 210 residues long: Imidazoleglycerol-phosphate dehydratase (210 aa).

Belongs to the imidazoleglycerol-phosphate dehydratase family.

The protein resides in the cytoplasm. It carries out the reaction D-erythro-1-(imidazol-4-yl)glycerol 3-phosphate = 3-(imidazol-4-yl)-2-oxopropyl phosphate + H2O. The protein operates within amino-acid biosynthesis; L-histidine biosynthesis; L-histidine from 5-phospho-alpha-D-ribose 1-diphosphate: step 6/9. In Mycobacterium bovis (strain ATCC BAA-935 / AF2122/97), this protein is Imidazoleglycerol-phosphate dehydratase.